The sequence spans 637 residues: Nuclear receptor subfamily 2 group C member 1-B (637 aa).

Positions 149–224 (VELCVVCGDK…LGMKQDSVQC (76 aa)) form a DNA-binding region, nuclear receptor. 2 consecutive NR C4-type zinc fingers follow at residues 152–172 (CVVC…CEGC) and 188–207 (CRGS…CQYC). The 242-residue stretch at 383–624 (CVGSGSNLLP…SIIPYILRME (242 aa)) folds into the NR LBD domain.

Belongs to the nuclear hormone receptor family. NR2 subfamily.

It localises to the nucleus. In terms of biological role, orphan nuclear receptor. Binds the IR7 element in the promoter of its own gene in an autoregulatory negative feedback mechanism. Primarily repressor of a broad range of genes. Binds to hormone response elements (HREs) consisting of two 5'-AGGTCA-3' half site direct repeat consensus sequences. This is Nuclear receptor subfamily 2 group C member 1-B (nr2c1-b) from Xenopus laevis (African clawed frog).